Reading from the N-terminus, the 577-residue chain is Cytochrome P450 714D1 (577 aa).

The Lumenal segment spans residues 1-3 (MES). A helical; Signal-anchor for type III membrane protein membrane pass occupies residues 4 to 24 (FFVFFTAAALPVVVAAAVIAG). Residues 25–577 (LCITAAWLAR…STAPVHSSHN (553 aa)) are Cytoplasmic-facing. Positions 315-343 (REHGGKAAPPSPPERDFLGSIIENSGGQP) are disordered. Residue cysteine 504 participates in heme binding.

This sequence belongs to the cytochrome P450 family. Heme serves as cofactor. As to expression, expressed in rapidly elongating or dividing tissues, including the shoot apical meristem, the intercalary meristem and elongating zones of internodes, and panicle but not in young seedlings, roots and leaves. During the heading stage, the highest expression is detected in the flowering spikelets, anthers, the divisional zone and the node of the uppermost internode.

The protein resides in the endoplasmic reticulum membrane. Catalyzes the 16alpha,17-epoxidation on non-13-hydroxylated gibberellins (GAs), including GA4, GA9, and GA12. No activity with GA1, GA20, GA53 or ent-kaurenoic acid. Reduces the biological activity of GAs. This is Cytochrome P450 714D1 (CYP714D1) from Oryza sativa subsp. japonica (Rice).